The following is a 273-amino-acid chain: 4-hydroxy-tetrahydrodipicolinate reductase (273 aa).

NAD(+)-binding positions include 12–17 and Glu-38; that span reads GAGGRM. An NADP(+)-binding site is contributed by Arg-39. NAD(+)-binding positions include 102–104 and 126–129; these read GTT and AANF. His-159 acts as the Proton donor/acceptor in catalysis. Position 160 (His-160) interacts with (S)-2,3,4,5-tetrahydrodipicolinate. The Proton donor role is filled by Lys-163. Residue 169–170 participates in (S)-2,3,4,5-tetrahydrodipicolinate binding; sequence GT.

It belongs to the DapB family. Homotetramer.

It is found in the cytoplasm. The enzyme catalyses (S)-2,3,4,5-tetrahydrodipicolinate + NAD(+) + H2O = (2S,4S)-4-hydroxy-2,3,4,5-tetrahydrodipicolinate + NADH + H(+). It carries out the reaction (S)-2,3,4,5-tetrahydrodipicolinate + NADP(+) + H2O = (2S,4S)-4-hydroxy-2,3,4,5-tetrahydrodipicolinate + NADPH + H(+). It participates in amino-acid biosynthesis; L-lysine biosynthesis via DAP pathway; (S)-tetrahydrodipicolinate from L-aspartate: step 4/4. Its function is as follows. Catalyzes the conversion of 4-hydroxy-tetrahydrodipicolinate (HTPA) to tetrahydrodipicolinate. This chain is 4-hydroxy-tetrahydrodipicolinate reductase, found in Escherichia coli O127:H6 (strain E2348/69 / EPEC).